Here is a 239-residue protein sequence, read N- to C-terminus: MVIKAQSPAGFAEEYIIESIWNNRFPPGTILPAERELSELIGVTRTTLREVLQRLARDGWLTIQHGKPTKVNNFWETSGLNILETLARLDHESVPQLIDNLLSVRTNISTIFIRTALRQHPDKAQEVLATAHEVADHADAFADLDYNIFRGLAFASGNPIYGLILNGMKGLYTRIGRHYFANPEARSLALGFYHKLSSLCEQGAHDQVYETVRRYGHDSGEIWHRMQKNLPGDLAIQGR.

The HTH gntR-type domain occupies 6-74; that stretch reads QSPAGFAEEY…HGKPTKVNNF (69 aa). The H-T-H motif DNA-binding region spans 34–53; that stretch reads ERELSELIGVTRTTLREVLQ.

In terms of assembly, homodimer.

Its subcellular location is the cytoplasm. Functionally, multifunctional regulator of fatty acid metabolism. Represses transcription of at least eight genes required for fatty acid transport and beta-oxidation including fadA, fadB, fadD, fadL and fadE. Activates transcription of at least three genes required for unsaturated fatty acid biosynthesis: fabA, fabB and iclR, the gene encoding the transcriptional regulator of the aceBAK operon encoding the glyoxylate shunt enzymes. Binding of FadR is specifically inhibited by long chain fatty acyl-CoA compounds. This Salmonella typhimurium (strain LT2 / SGSC1412 / ATCC 700720) protein is Fatty acid metabolism regulator protein.